Consider the following 628-residue polypeptide: Chaperone protein HtpG (628 aa).

Positions 1–337 (MSEKKYTFET…SADLPLNVSR (337 aa)) are a; substrate-binding. The b stretch occupies residues 338–554 (EILQHNKVID…DYGMSLHMQK (217 aa)). The segment at 555–628 (MMEEAGQSFM…FVKLVNKYIR (74 aa)) is c.

This sequence belongs to the heat shock protein 90 family. Homodimer.

Its subcellular location is the cytoplasm. In terms of biological role, molecular chaperone. Has ATPase activity. The protein is Chaperone protein HtpG of Francisella tularensis subsp. holarctica (strain FTNF002-00 / FTA).